The chain runs to 263 residues: uncharacterized protein (263 aa).

The next 7 membrane-spanning stretches (helical) occupy residues 53–73 (FWIILILTFISLCEVKLLVKI), 103–123 (GFLFGSPFAIGQIILFLLPGL), 130–150 (IILPLLLSSLGLFGFGLVFSY), 153–173 (LIPAALNFFLNYSDEVIEPLW), 181–201 (FILVLFYSTGLAFQIPIIQIL), 213–233 (MLAAWRYIILVSTIIGAILTP), and 241–261 (LLLSIAILMLYFSGVGILFLI).

Belongs to the TatC family.

It is found in the plastid. The protein resides in the chloroplast membrane. This is an uncharacterized protein from Trieres chinensis (Marine centric diatom).